Reading from the N-terminus, the 329-residue chain is Phosphate acyltransferase (329 aa).

This sequence belongs to the PlsX family. Homodimer. Probably interacts with PlsY.

The protein resides in the cytoplasm. It carries out the reaction a fatty acyl-[ACP] + phosphate = an acyl phosphate + holo-[ACP]. Its pathway is lipid metabolism; phospholipid metabolism. Functionally, catalyzes the reversible formation of acyl-phosphate (acyl-PO(4)) from acyl-[acyl-carrier-protein] (acyl-ACP). This enzyme utilizes acyl-ACP as fatty acyl donor, but not acyl-CoA. This is Phosphate acyltransferase from Sulfurovum sp. (strain NBC37-1).